The sequence spans 587 residues: Protein NRT1/ PTR FAMILY 2.9 (587 aa).

The next 12 helical transmembrane spans lie at 35–55, 65–85, 94–114, 135–155, 181–201, 209–229, 325–345, 368–388, 412–432, 457–477, 493–513, and 540–560; these read FEKL…TTVF, VVNI…FLCD, LSFA…TAVI, IGQI…AGGI, FFNW…TLIV, WSIG…IFFA, CVIR…AYIQ, IPAG…IPIY, VGAG…VEQY, GMWL…AGVG, FAGS…TFLL, and YFYF…LLVS.

It belongs to the major facilitator superfamily. Proton-dependent oligopeptide transporter (POT/PTR) (TC 2.A.17) family. Expressed in roots, stems and major veins of the leaves. Detected in the companion cells of the root phloem.

The protein localises to the cell membrane. Low-affinity nitrate transporter facilitating nitrate loading into root phloem. Not involved in dipeptides transport, but has a weak glucosinolate transport activity. This is Protein NRT1/ PTR FAMILY 2.9 (NPF2.9) from Arabidopsis thaliana (Mouse-ear cress).